Reading from the N-terminus, the 213-residue chain is Orotate phosphoribosyltransferase (213 aa).

Lysine 26 contacts 5-phospho-alpha-D-ribose 1-diphosphate. Residue 34–35 (FF) coordinates orotate. 5-phospho-alpha-D-ribose 1-diphosphate contacts are provided by residues 72–73 (YK), arginine 99, lysine 100, lysine 103, histidine 105, and 124–132 (DDVITAGTA). Residues threonine 128 and arginine 156 each coordinate orotate.

This sequence belongs to the purine/pyrimidine phosphoribosyltransferase family. PyrE subfamily. As to quaternary structure, homodimer. Mg(2+) is required as a cofactor.

The catalysed reaction is orotidine 5'-phosphate + diphosphate = orotate + 5-phospho-alpha-D-ribose 1-diphosphate. Its pathway is pyrimidine metabolism; UMP biosynthesis via de novo pathway; UMP from orotate: step 1/2. Its function is as follows. Catalyzes the transfer of a ribosyl phosphate group from 5-phosphoribose 1-diphosphate to orotate, leading to the formation of orotidine monophosphate (OMP). The protein is Orotate phosphoribosyltransferase of Vibrio cholerae serotype O1 (strain ATCC 39315 / El Tor Inaba N16961).